A 148-amino-acid chain; its full sequence is Transcriptional regulator MraZ (148 aa).

2 consecutive SpoVT-AbrB domains span residues 5-51 (AAAL…PSPA) and 80-123 (ARTE…SEAG).

It belongs to the MraZ family. In terms of assembly, forms oligomers.

It localises to the cytoplasm. The protein resides in the nucleoid. The polypeptide is Transcriptional regulator MraZ (Dechloromonas aromatica (strain RCB)).